Reading from the N-terminus, the 130-residue chain is Ribonuclease pancreatic (130 aa).

The N-terminal stretch at 1 to 6 (VQPSLG) is a signal peptide. Residues K13 and R16 each coordinate substrate. The active-site Proton acceptor is the H18. Disulfide bonds link C32/C90, C46/C101, C64/C116, and C71/C78. N-linked (GlcNAc...) asparagine glycosylation is present at N40. Substrate contacts are provided by residues 47–51 (KPVNT), K72, and R91. The Proton donor role is filled by H125.

Belongs to the pancreatic ribonuclease family. As to quaternary structure, monomer. Interacts with and forms tight 1:1 complexes with RNH1. Dimerization of two such complexes may occur. Interaction with RNH1 inhibits this protein. In terms of tissue distribution, pancreas.

The protein resides in the secreted. It carries out the reaction an [RNA] containing cytidine + H2O = an [RNA]-3'-cytidine-3'-phosphate + a 5'-hydroxy-ribonucleotide-3'-[RNA].. The enzyme catalyses an [RNA] containing uridine + H2O = an [RNA]-3'-uridine-3'-phosphate + a 5'-hydroxy-ribonucleotide-3'-[RNA].. Functionally, endonuclease that catalyzes the cleavage of RNA on the 3' side of pyrimidine nucleotides. Acts on single-stranded and double-stranded RNA. In Cricetulus griseus (Chinese hamster), this protein is Ribonuclease pancreatic (RNASE1).